Here is a 1448-residue protein sequence, read N- to C-terminus: Protein clueless (1448 aa).

Disordered regions lie at residues 1-96 (MALE…HAEK), 110-129 (NANV…ADGD), and 265-286 (RTRP…VSDP). Composition is skewed to low complexity over residues 9 to 26 (NSNA…TKAS) and 41 to 66 (NLNP…ADGP). The segment covering 68–77 (AKKKGKKNRN) has biased composition (basic residues). The segment covering 78–88 (KSPTEPTTEAV) has biased composition (polar residues). Serine 270 carries the phosphoserine modification. The Clu domain occupies 424–666 (RAEDAFSSKL…RTFPPDVNFL (243 aa)). 3 disordered regions span residues 726 to 773 (SEKS…SGEA), 958 to 1010 (AVSS…SASD), and 1414 to 1448 (GEAE…ATSS). Positions 748 to 769 (GAEKPDDKEKKNEEEEKKERST) are enriched in basic and acidic residues. Positions 966–981 (KKRGNGGKHNKHKSSK) are enriched in basic residues. Over residues 986–1007 (QQQQQTTGNQNGSSSGSSNSSS) the composition is skewed to low complexity. Residues 1419-1429 (AVSKDIKEQPE) show a composition bias toward basic and acidic residues.

This sequence belongs to the CLU family.

It localises to the cytoplasm. Functionally, mRNA-binding protein involved in proper cytoplasmic distribution of mitochondria. In Drosophila melanogaster (Fruit fly), this protein is Protein clueless.